Consider the following 178-residue polypeptide: MALKELFDRDWQELESEGILFSNLEKLVAWGRSNSLWPATFGLACCAIEMMSSTNARNDMARFGSEVFRASPRQADVMIVAGRLSKKMAPVMRRVYDQMPDPKWVIAMGACASSGGMFNNYAIVQNVDSVVPVDIYVPGCPPRPEALIYAVMQLQKKVRGEAFDQLGHQLPMVDAWTR.

Residues cysteine 45, cysteine 46, cysteine 111, and cysteine 140 each contribute to the [4Fe-4S] cluster site.

This sequence belongs to the complex I 20 kDa subunit family. In terms of assembly, NDH-1 is composed of 15 different subunits. Subunits NuoB, C, D, E, F, and G constitute the peripheral sector of the complex. [4Fe-4S] cluster serves as cofactor.

The protein resides in the cell membrane. The catalysed reaction is a quinone + NADH + 5 H(+)(in) = a quinol + NAD(+) + 4 H(+)(out). Functionally, NDH-1 shuttles electrons from NADH, via FMN and iron-sulfur (Fe-S) centers, to quinones in the respiratory chain. The immediate electron acceptor for the enzyme in this species is believed to be a menaquinone. Couples the redox reaction to proton translocation (for every two electrons transferred, four hydrogen ions are translocated across the cytoplasmic membrane), and thus conserves the redox energy in a proton gradient. This chain is NADH-quinone oxidoreductase subunit B, found in Deinococcus deserti (strain DSM 17065 / CIP 109153 / LMG 22923 / VCD115).